The following is a 146-amino-acid chain: Hemoglobin subunit beta (146 aa).

One can recognise a Globin domain in the interval 2 to 146; the sequence is HWTETERATI…VVAALSREYH (145 aa). 2 residues coordinate heme b: His-63 and His-92.

This sequence belongs to the globin family. Heterotetramer of two alpha chains and two beta chains (an easy dimerization is also reported). Red blood cells.

Its function is as follows. Involved in oxygen transport from the lung to the various peripheral tissues. The protein is Hemoglobin subunit beta (HBB) of Latimeria chalumnae (Coelacanth).